A 296-amino-acid chain; its full sequence is HTH-type transcriptional regulator IlvR (296 aa).

Residues 1–58 (MDIRQFRHFAAVAETLHFGRAAERLGITQPPLSQSIQALEKALGAPLFARTKRHVELT) form the HTH lysR-type domain. The H-T-H motif DNA-binding region spans 18-37 (FGRAAERLGITQPPLSQSIQ).

It belongs to the LysR transcriptional regulatory family.

Functionally, positively regulates the expression of the ilvD gene while negatively autoregulating its own expression. This Caulobacter vibrioides (strain ATCC 19089 / CIP 103742 / CB 15) (Caulobacter crescentus) protein is HTH-type transcriptional regulator IlvR (ilvR).